A 1005-amino-acid chain; its full sequence is Band 4.1-like protein 2 (1005 aa).

A disordered region spans residues 1–80 (MTTEVGSVSE…SRGISRFIPP (80 aa)). An N-acetylthreonine modification is found at Thr-2. A Phosphoserine modification is found at Ser-7. The segment covering 22 to 31 (ATKEKPKEVA) has biased composition (basic and acidic residues). 3 positions are modified to phosphoserine: Ser-39, Ser-58, and Ser-87. Phosphothreonine is present on Thr-89. A disordered region spans residues 93-196 (AKDGGDKKEP…GGAAKRETKE (104 aa)). Composition is skewed to basic and acidic residues over residues 111–157 (VLDK…EKPS) and 169–196 (VSKE…ETKE). Glycyl lysine isopeptide (Lys-Gly) (interchain with G-Cter in SUMO2) cross-links involve residues Lys-140 and Lys-144. Ser-170, Ser-208, Ser-386, Ser-402, Ser-499, Ser-550, Ser-562, Ser-575, Ser-598, and Ser-614 each carry phosphoserine. Residues 218–499 (VQCKVTLLDG…EHHTFYRLVS (282 aa)) enclose the FERM domain. Residues 502-610 (QPPKAKFLTL…KAPHLQLIEG (109 aa)) form a hydrophilic region. The interval 611-676 (KKNSLRVEGD…WEKRRITPLS (66 aa)) is spectrin--actin-binding. The residue at position 623 (Tyr-623) is a Phosphotyrosine. A phosphoserine mark is found at Ser-627 and Ser-647. The tract at residues 652–800 (KRNFMESTPE…EEAVPEASPV (149 aa)) is disordered. Residues 675–686 (LSLQTQGSSHET) are compositionally biased toward polar residues. Positions 690 to 711 (VEEKKRAEVGKDERVITEEMNG) are enriched in basic and acidic residues. A phosphoserine mark is found at Ser-715 and Ser-718. The span at 734-746 (STSLSSESSSSSS) shows a compositional bias: low complexity. 2 stretches are compositionally biased toward basic and acidic residues: residues 754-770 (GEYR…IREE) and 780-793 (EPRP…REEA). Residue Thr-763 is modified to Phosphothreonine. Ser-828 is modified (phosphoserine). The interval 855–1005 (HVDIDVLPQI…ETELAEEGED (151 aa)) is C-terminal (CTD).

Interacts with FCGR1A. Interacts with TRPC4. Interacts (via CTD domain) with FKBP2. Interacts with NUMA1; this interaction is negatively regulated by CDK1 during metaphase and promotes anaphase-specific localization of NUMA1 in symmetrically dividing cells. As to expression, widely expressed.

It is found in the cytoplasm. Its subcellular location is the cytoskeleton. The protein resides in the cell cortex. The protein localises to the cell membrane. Functionally, required for dynein-dynactin complex and NUMA1 recruitment at the mitotic cell cortex during anaphase. The protein is Band 4.1-like protein 2 of Homo sapiens (Human).